A 136-amino-acid chain; its full sequence is Holo-[acyl-carrier-protein] synthase (136 aa).

Mg(2+)-binding residues include Asp8 and Glu57.

Belongs to the P-Pant transferase superfamily. AcpS family. The cofactor is Mg(2+).

The protein resides in the cytoplasm. The enzyme catalyses apo-[ACP] + CoA = holo-[ACP] + adenosine 3',5'-bisphosphate + H(+). In terms of biological role, transfers the 4'-phosphopantetheine moiety from coenzyme A to a Ser of acyl-carrier-protein. The sequence is that of Holo-[acyl-carrier-protein] synthase from Methylorubrum populi (strain ATCC BAA-705 / NCIMB 13946 / BJ001) (Methylobacterium populi).